A 397-amino-acid polypeptide reads, in one-letter code: Lysophospholipid transporter LplT (397 aa).

Over 1–17 the chain is Periplasmic; it reads MSESVHTNTSLWSKGMK. Residues 18 to 38 form a helical membrane-spanning segment; sequence AVIVAQFLSAFGDNALLFATL. The Cytoplasmic segment spans residues 39 to 52; the sequence is ALLKAQFYPEWSQP. Residues 53–73 traverse the membrane as a helical segment; sequence ILQMVFVGAYILFAPFVGQVA. The Periplasmic portion of the chain corresponds to 74 to 90; the sequence is DSFAKGRVMMFANGLKL. A helical membrane pass occupies residues 91 to 111; the sequence is LGAASICFGINPFLGYTLVGV. Residues 112 to 144 are Cytoplasmic-facing; it reads GAAAYSPAKYGILGELTTGSKLVKANGLMEAST. Residues 145-165 form a helical membrane-spanning segment; sequence IAAILLGSVAGGVLADWHILV. Ala166 is a topological domain (periplasmic). Residues 167–187 traverse the membrane as a helical segment; it reads LVACALAYGGAVVANIYIPKL. Residues 188–226 are Cytoplasmic-facing; that stretch reads AAARPGQSWNLISMTRSFLNACTSLWRNGETRFSLVGTS. Residues 227 to 247 traverse the membrane as a helical segment; it reads LFWGAGVTLRFLLVLWVPVAL. Residues 248 to 256 are Periplasmic-facing; sequence GITDNATPT. A helical membrane pass occupies residues 257-277; that stretch reads YLNAMVAIGIVVGAGAAAKLV. The Cytoplasmic segment spans residues 278-280; the sequence is TLE. A helical membrane pass occupies residues 281–301; sequence TVSRCMPAGILIGVVVLIFSL. The Periplasmic portion of the chain corresponds to 302-304; that stretch reads QHE. A helical transmembrane segment spans residues 305–325; the sequence is LLPAYALLMLIGVLGGFFVVP. At 326 to 343 the chain is on the cytoplasmic side; that stretch reads LNALLQERGKKSVGAGNA. The chain crosses the membrane as a helical span at residues 344–364; the sequence is IAVQNLGENSAMLLMLGIYSL. The Periplasmic segment spans residues 365–366; the sequence is AV. A helical transmembrane segment spans residues 367–387; sequence MVGIPVVPIGIGFGALFALAI. The Cytoplasmic portion of the chain corresponds to 388–397; that stretch reads TALWIWQRRH.

The protein belongs to the major facilitator superfamily. LplT (TC 2.A.1.42) family.

Its subcellular location is the cell inner membrane. Functionally, catalyzes the facilitated diffusion of 2-acyl-glycero-3-phosphoethanolamine (2-acyl-GPE) into the cell. This chain is Lysophospholipid transporter LplT, found in Escherichia coli O81 (strain ED1a).